The sequence spans 345 residues: Biotin synthase (345 aa).

The Radical SAM core domain maps to N39–R266. [4Fe-4S] cluster is bound by residues C54, C58, and C61. C98, C129, C189, and R261 together coordinate [2Fe-2S] cluster.

This sequence belongs to the radical SAM superfamily. Biotin synthase family. As to quaternary structure, homodimer. [4Fe-4S] cluster is required as a cofactor. [2Fe-2S] cluster serves as cofactor.

The catalysed reaction is (4R,5S)-dethiobiotin + (sulfur carrier)-SH + 2 reduced [2Fe-2S]-[ferredoxin] + 2 S-adenosyl-L-methionine = (sulfur carrier)-H + biotin + 2 5'-deoxyadenosine + 2 L-methionine + 2 oxidized [2Fe-2S]-[ferredoxin]. It participates in cofactor biosynthesis; biotin biosynthesis; biotin from 7,8-diaminononanoate: step 2/2. Its function is as follows. Catalyzes the conversion of dethiobiotin (DTB) to biotin by the insertion of a sulfur atom into dethiobiotin via a radical-based mechanism. The sequence is that of Biotin synthase from Idiomarina loihiensis (strain ATCC BAA-735 / DSM 15497 / L2-TR).